The chain runs to 100 residues: Large ribosomal subunit protein uL23 (100 aa).

The protein belongs to the universal ribosomal protein uL23 family. As to quaternary structure, part of the 50S ribosomal subunit. Contacts protein L29, and trigger factor when it is bound to the ribosome.

Its function is as follows. One of the early assembly proteins it binds 23S rRNA. One of the proteins that surrounds the polypeptide exit tunnel on the outside of the ribosome. Forms the main docking site for trigger factor binding to the ribosome. The sequence is that of Large ribosomal subunit protein uL23 from Shewanella amazonensis (strain ATCC BAA-1098 / SB2B).